We begin with the raw amino-acid sequence, 305 residues long: DNA-directed RNA polymerase 35 kDa subunit (305 aa).

It belongs to the poxviridae DNA-directed RNA polymerase 35 kDa subunit family. In terms of assembly, the DNA-dependent RNA polymerase used for intermediate and late genes expression consists of eight subunits 147 kDa, 133 kDa, 35 kDa, 30 kDa, 22 kDa, 19 kDa, 18 kDa and 7 kDa totalling more than 500 kDa in mass. The same holoenzyme, with the addition of the transcription-specificity factor RAP94, is used for early gene expression.

The protein localises to the virion. The catalysed reaction is RNA(n) + a ribonucleoside 5'-triphosphate = RNA(n+1) + diphosphate. In terms of biological role, part of the DNA-dependent RNA polymerase which catalyzes the transcription of viral DNA into RNA using the four ribonucleoside triphosphates as substrates. Responsible for the transcription of early, intermediate and late genes. DNA-dependent RNA polymerase associates with the early transcription factor (ETF) thereby allowing the early genes transcription. Late transcription, and probably also intermediate transcription, require newly synthesized RNA polymerase. This is DNA-directed RNA polymerase 35 kDa subunit (RPO35) from Rabbitpox virus (strain Utrecht) (RPV).